The chain runs to 466 residues: Uronate isomerase (466 aa).

This sequence belongs to the metallo-dependent hydrolases superfamily. Uronate isomerase family.

It carries out the reaction D-glucuronate = D-fructuronate. It catalyses the reaction aldehydo-D-galacturonate = keto-D-tagaturonate. It functions in the pathway carbohydrate metabolism; pentose and glucuronate interconversion. The polypeptide is Uronate isomerase (Streptococcus agalactiae serotype V (strain ATCC BAA-611 / 2603 V/R)).